Reading from the N-terminus, the 271-residue chain is MTLLSSADTLTLHGQTFASRVLLGTSRYPSLQSLSDSIAAARPGMVTVALRRQMNAGAAEAGFFDLLKRHDVPLLPNTAGCQTIAEAVTTAQMAREVFETDWIKLELIGDDYTLQPDPVGLIEAAALLVKDGFKVLPYCTEDLVIARRLLDAGCEALMPWGAPIGTGKGVVNPYGLRVLRERLPDVPLIVDAGLGVPSHACQVMEWGFDGVLLNTAVSQATHPEIMARAFAQGVDAGRAAYLAGPMDARESAHASTPVVGMPFWHQDGSHA.

The Schiff-base intermediate with DXP role is filled by lysine 104. 1-deoxy-D-xylulose 5-phosphate-binding positions include glycine 165, alanine 192–glycine 193, and asparagine 214–threonine 215.

Belongs to the ThiG family. As to quaternary structure, homotetramer. Forms heterodimers with either ThiH or ThiS.

The protein resides in the cytoplasm. It carries out the reaction [ThiS sulfur-carrier protein]-C-terminal-Gly-aminoethanethioate + 2-iminoacetate + 1-deoxy-D-xylulose 5-phosphate = [ThiS sulfur-carrier protein]-C-terminal Gly-Gly + 2-[(2R,5Z)-2-carboxy-4-methylthiazol-5(2H)-ylidene]ethyl phosphate + 2 H2O + H(+). It participates in cofactor biosynthesis; thiamine diphosphate biosynthesis. In terms of biological role, catalyzes the rearrangement of 1-deoxy-D-xylulose 5-phosphate (DXP) to produce the thiazole phosphate moiety of thiamine. Sulfur is provided by the thiocarboxylate moiety of the carrier protein ThiS. In vitro, sulfur can be provided by H(2)S. This chain is Thiazole synthase, found in Burkholderia thailandensis (strain ATCC 700388 / DSM 13276 / CCUG 48851 / CIP 106301 / E264).